The chain runs to 257 residues: Acetylglutamate kinase (257 aa).

Residues 43 to 44 (GG), R65, and N157 contribute to the substrate site. Residues 180 to 185 (DVSGIL) and 208 to 210 (IIT) contribute to the ATP site.

The protein belongs to the acetylglutamate kinase family. ArgB subfamily. In terms of assembly, homodimer.

The protein resides in the cytoplasm. It carries out the reaction N-acetyl-L-glutamate + ATP = N-acetyl-L-glutamyl 5-phosphate + ADP. The protein operates within amino-acid biosynthesis; L-arginine biosynthesis; N(2)-acetyl-L-ornithine from L-glutamate: step 2/4. Its function is as follows. Catalyzes the ATP-dependent phosphorylation of N-acetyl-L-glutamate. In Escherichia coli O139:H28 (strain E24377A / ETEC), this protein is Acetylglutamate kinase.